A 353-amino-acid polypeptide reads, in one-letter code: Photosystem II protein D1 (353 aa).

At T2 the chain carries N-acetylthreonine. T2 is modified (phosphothreonine). 3 helical membrane-spanning segments follow: residues 29–46 (YIGW…TATS), 118–133 (HFLL…EWEL), and 142–156 (WIAV…AATA). H118 lines the chlorophyll a pocket. Y126 contributes to the pheophytin a binding site. [CaMn4O5] cluster-binding residues include D170 and E189. A helical membrane pass occupies residues 197–218 (FHMLGVAGVFGGSLFSAMHGSL). Chlorophyll a is bound at residue H198. A quinone contacts are provided by residues H215 and 264–265 (SF). H215 contacts Fe cation. H272 provides a ligand contact to Fe cation. A helical transmembrane segment spans residues 274–288 (FLAAWPVVGIWFTAL). 4 residues coordinate [CaMn4O5] cluster: H332, E333, D342, and A344. Positions 345 to 353 (AVEVPSING) are excised as a propeptide.

This sequence belongs to the reaction center PufL/M/PsbA/D family. In terms of assembly, PSII is composed of 1 copy each of membrane proteins PsbA, PsbB, PsbC, PsbD, PsbE, PsbF, PsbH, PsbI, PsbJ, PsbK, PsbL, PsbM, PsbT, PsbX, PsbY, PsbZ, Psb30/Ycf12, at least 3 peripheral proteins of the oxygen-evolving complex and a large number of cofactors. It forms dimeric complexes. The D1/D2 heterodimer binds P680, chlorophylls that are the primary electron donor of PSII, and subsequent electron acceptors. It shares a non-heme iron and each subunit binds pheophytin, quinone, additional chlorophylls, carotenoids and lipids. D1 provides most of the ligands for the Mn4-Ca-O5 cluster of the oxygen-evolving complex (OEC). There is also a Cl(-1) ion associated with D1 and D2, which is required for oxygen evolution. The PSII complex binds additional chlorophylls, carotenoids and specific lipids. serves as cofactor. Post-translationally, tyr-161 forms a radical intermediate that is referred to as redox-active TyrZ, YZ or Y-Z. In terms of processing, C-terminally processed by CTPA; processing is essential to allow assembly of the oxygen-evolving complex and thus photosynthetic growth.

The protein resides in the plastid. It localises to the chloroplast thylakoid membrane. It carries out the reaction 2 a plastoquinone + 4 hnu + 2 H2O = 2 a plastoquinol + O2. Photosystem II (PSII) is a light-driven water:plastoquinone oxidoreductase that uses light energy to abstract electrons from H(2)O, generating O(2) and a proton gradient subsequently used for ATP formation. It consists of a core antenna complex that captures photons, and an electron transfer chain that converts photonic excitation into a charge separation. The D1/D2 (PsbA/PsbD) reaction center heterodimer binds P680, the primary electron donor of PSII as well as several subsequent electron acceptors. The chain is Photosystem II protein D1 from Triticum aestivum (Wheat).